The chain runs to 455 residues: Bifunctional protein GlmU (455 aa).

The interval 1–227 (MKLKAIILAA…YEEIMAVNSR (227 aa)) is pyrophosphorylase. Residues 8 to 11 (LAAG), Lys-22, Gln-72, and 77 to 78 (GT) each bind UDP-N-acetyl-alpha-D-glucosamine. Asp-100 contacts Mg(2+). 4 residues coordinate UDP-N-acetyl-alpha-D-glucosamine: Gly-137, Glu-152, Asn-167, and Asn-225. Asn-225 is a Mg(2+) binding site. The interval 228 to 248 (EQLADVEAIMRRRIAKKHMAN) is linker. The N-acetyltransferase stretch occupies residues 249 to 455 (GVTIMNPEHV…WTKRKGLLKK (207 aa)). UDP-N-acetyl-alpha-D-glucosamine contacts are provided by Arg-330 and Lys-348. His-360 acts as the Proton acceptor in catalysis. Positions 363 and 374 each coordinate UDP-N-acetyl-alpha-D-glucosamine. Residues 383–384 (NY), Ser-402, Cys-420, and Arg-437 each bind acetyl-CoA.

In the N-terminal section; belongs to the N-acetylglucosamine-1-phosphate uridyltransferase family. It in the C-terminal section; belongs to the transferase hexapeptide repeat family. Homotrimer. Mg(2+) is required as a cofactor.

Its subcellular location is the cytoplasm. It carries out the reaction alpha-D-glucosamine 1-phosphate + acetyl-CoA = N-acetyl-alpha-D-glucosamine 1-phosphate + CoA + H(+). It catalyses the reaction N-acetyl-alpha-D-glucosamine 1-phosphate + UTP + H(+) = UDP-N-acetyl-alpha-D-glucosamine + diphosphate. Its pathway is nucleotide-sugar biosynthesis; UDP-N-acetyl-alpha-D-glucosamine biosynthesis; N-acetyl-alpha-D-glucosamine 1-phosphate from alpha-D-glucosamine 6-phosphate (route II): step 2/2. It functions in the pathway nucleotide-sugar biosynthesis; UDP-N-acetyl-alpha-D-glucosamine biosynthesis; UDP-N-acetyl-alpha-D-glucosamine from N-acetyl-alpha-D-glucosamine 1-phosphate: step 1/1. It participates in bacterial outer membrane biogenesis; LPS lipid A biosynthesis. Catalyzes the last two sequential reactions in the de novo biosynthetic pathway for UDP-N-acetylglucosamine (UDP-GlcNAc). The C-terminal domain catalyzes the transfer of acetyl group from acetyl coenzyme A to glucosamine-1-phosphate (GlcN-1-P) to produce N-acetylglucosamine-1-phosphate (GlcNAc-1-P), which is converted into UDP-GlcNAc by the transfer of uridine 5-monophosphate (from uridine 5-triphosphate), a reaction catalyzed by the N-terminal domain. The sequence is that of Bifunctional protein GlmU from Alkaliphilus oremlandii (strain OhILAs) (Clostridium oremlandii (strain OhILAs)).